The chain runs to 320 residues: Aspartate carbamoyltransferase catalytic subunit (320 aa).

Residues arginine 70 and threonine 71 each contribute to the carbamoyl phosphate site. Lysine 98 contributes to the L-aspartate binding site. Arginine 120, histidine 150, and glutamine 153 together coordinate carbamoyl phosphate. Residues arginine 184 and arginine 239 each contribute to the L-aspartate site. Carbamoyl phosphate contacts are provided by glycine 280 and proline 281.

The protein belongs to the aspartate/ornithine carbamoyltransferase superfamily. ATCase family. Heterododecamer (2C3:3R2) of six catalytic PyrB chains organized as two trimers (C3), and six regulatory PyrI chains organized as three dimers (R2).

The catalysed reaction is carbamoyl phosphate + L-aspartate = N-carbamoyl-L-aspartate + phosphate + H(+). It functions in the pathway pyrimidine metabolism; UMP biosynthesis via de novo pathway; (S)-dihydroorotate from bicarbonate: step 2/3. Functionally, catalyzes the condensation of carbamoyl phosphate and aspartate to form carbamoyl aspartate and inorganic phosphate, the committed step in the de novo pyrimidine nucleotide biosynthesis pathway. The protein is Aspartate carbamoyltransferase catalytic subunit of Xylella fastidiosa (strain Temecula1 / ATCC 700964).